The primary structure comprises 293 residues: Protease HtpX (293 aa).

Transmembrane regions (helical) follow at residues 4 to 24 and 34 to 54; these read IALF…VLSL and GLMI…LLMS. A Zn(2+)-binding site is contributed by H139. Residue E140 is part of the active site. H143 is a binding site for Zn(2+). Transmembrane regions (helical) follow at residues 158-178 and 193-213; these read VVNT…AGFM and LIYF…ASII. E222 provides a ligand contact to Zn(2+).

It belongs to the peptidase M48B family. Zn(2+) serves as cofactor.

Its subcellular location is the cell inner membrane. This is Protease HtpX from Escherichia coli (strain ATCC 8739 / DSM 1576 / NBRC 3972 / NCIMB 8545 / WDCM 00012 / Crooks).